Consider the following 346-residue polypeptide: 3-dehydroquinate synthase (346 aa).

Residues 62 to 67, 96 to 100, 120 to 121, lysine 133, and lysine 142 contribute to the NAD(+) site; these read DGEQYK, GVISD, and TT. The Zn(2+) site is built by glutamate 175, histidine 234, and histidine 251.

It belongs to the sugar phosphate cyclases superfamily. Dehydroquinate synthase family. It depends on Co(2+) as a cofactor. The cofactor is Zn(2+). NAD(+) is required as a cofactor.

The protein localises to the cytoplasm. It catalyses the reaction 7-phospho-2-dehydro-3-deoxy-D-arabino-heptonate = 3-dehydroquinate + phosphate. The protein operates within metabolic intermediate biosynthesis; chorismate biosynthesis; chorismate from D-erythrose 4-phosphate and phosphoenolpyruvate: step 2/7. In terms of biological role, catalyzes the conversion of 3-deoxy-D-arabino-heptulosonate 7-phosphate (DAHP) to dehydroquinate (DHQ). This chain is 3-dehydroquinate synthase, found in Campylobacter fetus subsp. fetus (strain 82-40).